A 293-amino-acid chain; its full sequence is Cell division protein FtsQ (293 aa).

The Cytoplasmic portion of the chain corresponds to 1 to 27 (MRPLMRNRASERGVDPAPSRWAWRMQR). The chain crosses the membrane as a helical span at residues 28–48 (LLLTPAFLLFLRAGVPVLVLF). The Periplasmic portion of the chain corresponds to 49–293 (GAATWWLSDT…WWEIRQVSRQ (245 aa)). A POTRA domain is found at 81–149 (FMVQLMAVDG…GVLHIDVEPR (69 aa)).

This sequence belongs to the FtsQ/DivIB family. FtsQ subfamily.

It localises to the cell inner membrane. Essential cell division protein. The sequence is that of Cell division protein FtsQ from Roseobacter litoralis (strain ATCC 49566 / DSM 6996 / JCM 21268 / NBRC 15278 / OCh 149).